The following is a 165-amino-acid chain: Protein OPG091 (165 aa).

This sequence belongs to the orthopoxvirus OPG091 family.

It localises to the virion. It is found in the host cytoplasm. Contributes to vaccinia virus virulence in mice but not to replication in cell culture. This is Protein OPG091 (OPG091) from Vaccinia virus (strain Western Reserve) (VACV).